Reading from the N-terminus, the 378-residue chain is Signal recognition particle receptor FtsY (378 aa).

GTP-binding positions include 184–191 (GVNGTGKT), 266–270 (DTAGR), and 330–333 (TKLD).

It belongs to the GTP-binding SRP family. FtsY subfamily. As to quaternary structure, part of the signal recognition particle protein translocation system, which is composed of SRP and FtsY. SRP is a ribonucleoprotein composed of Ffh and a 4.5S RNA molecule.

It is found in the cell membrane. It localises to the cytoplasm. The catalysed reaction is GTP + H2O = GDP + phosphate + H(+). In terms of biological role, involved in targeting and insertion of nascent membrane proteins into the cytoplasmic membrane. Acts as a receptor for the complex formed by the signal recognition particle (SRP) and the ribosome-nascent chain (RNC). Interaction with SRP-RNC leads to the transfer of the RNC complex to the Sec translocase for insertion into the membrane, the hydrolysis of GTP by both Ffh and FtsY, and the dissociation of the SRP-FtsY complex into the individual components. The sequence is that of Signal recognition particle receptor FtsY from Buchnera aphidicola subsp. Acyrthosiphon pisum (strain APS) (Acyrthosiphon pisum symbiotic bacterium).